We begin with the raw amino-acid sequence, 184 residues long: Protein Syd (184 aa).

The protein belongs to the Syd family.

The protein localises to the cell inner membrane. In terms of biological role, interacts with the SecY protein in vivo. May bind preferentially to an uncomplexed state of SecY, thus functioning either as a chelating agent for excess SecY in the cell or as a regulatory factor that negatively controls the translocase function. This chain is Protein Syd, found in Psychromonas ingrahamii (strain DSM 17664 / CCUG 51855 / 37).